We begin with the raw amino-acid sequence, 257 residues long: UPF0246 protein Sbal223_3241 (257 aa).

Belongs to the UPF0246 family.

The chain is UPF0246 protein Sbal223_3241 from Shewanella baltica (strain OS223).